A 485-amino-acid polypeptide reads, in one-letter code: Glutamyl-tRNA(Gln) amidotransferase subunit A (485 aa).

Active-site charge relay system residues include Lys74 and Ser149. Catalysis depends on Ser173, which acts as the Acyl-ester intermediate.

Belongs to the amidase family. GatA subfamily. In terms of assembly, heterotrimer of A, B and C subunits.

The enzyme catalyses L-glutamyl-tRNA(Gln) + L-glutamine + ATP + H2O = L-glutaminyl-tRNA(Gln) + L-glutamate + ADP + phosphate + H(+). Its function is as follows. Allows the formation of correctly charged Gln-tRNA(Gln) through the transamidation of misacylated Glu-tRNA(Gln) in organisms which lack glutaminyl-tRNA synthetase. The reaction takes place in the presence of glutamine and ATP through an activated gamma-phospho-Glu-tRNA(Gln). The polypeptide is Glutamyl-tRNA(Gln) amidotransferase subunit A (Synechococcus sp. (strain RCC307)).